Reading from the N-terminus, the 434-residue chain is F-box/FBD/LRR-repeat protein At3g26920 (434 aa).

The 50-residue stretch at 16 to 65 folds into the F-box domain; it reads EDRISQLPEALLLQILSLLPTKEVVAVSVLAKRWRFLWKMVPSLEFFYYF. LRR repeat units lie at residues 69–95, 100–125, 145–172, 173–198, 219–244, 265–290, and 315–341; these read LERFSYNVSKCLFSHQAPFLQSLHLNM, DPRIMDFEILIGIAFGRQLRKLVLKV, TLELYHCILIDVPFPVCLKSLRTLNLHE, VEFVNDESVVNLLAGCISLENLVIHQ, VIVEYYEEFSVFVVNTPSLKYLKIEG, IIDVSFKVFESILGSLASVQRLSLKV, and TYKPKWWNLLTLMLDTSPNLQVLKIFD. One can recognise an FBD domain in the interval 353 to 403; that stretch reads KWNEPKNVPECLLLHLETFVWTCYEGKLENEIELAKYILRNARRLKKATFS.

The sequence is that of F-box/FBD/LRR-repeat protein At3g26920 from Arabidopsis thaliana (Mouse-ear cress).